The sequence spans 546 residues: Chaperonin GroEL 2 (546 aa).

ATP-binding positions include Thr30–Pro33, Lys51, Asp87–Thr91, Gly415, and Asp495. Positions Asp527–Phe546 are disordered. Positions Gly535–Phe546 are enriched in gly residues.

Belongs to the chaperonin (HSP60) family. In terms of assembly, forms a cylinder of 14 subunits composed of two heptameric rings stacked back-to-back. Interacts with the co-chaperonin GroES.

It localises to the cytoplasm. It carries out the reaction ATP + H2O + a folded polypeptide = ADP + phosphate + an unfolded polypeptide.. Together with its co-chaperonin GroES, plays an essential role in assisting protein folding. The GroEL-GroES system forms a nano-cage that allows encapsulation of the non-native substrate proteins and provides a physical environment optimized to promote and accelerate protein folding. This Burkholderia ambifaria (strain ATCC BAA-244 / DSM 16087 / CCUG 44356 / LMG 19182 / AMMD) (Burkholderia cepacia (strain AMMD)) protein is Chaperonin GroEL 2.